A 305-amino-acid chain; its full sequence is Pseudouridine-5'-phosphate glycosidase (305 aa).

The Proton donor role is filled by glutamate 30. The substrate site is built by lysine 91 and valine 111. Aspartate 143 contributes to the Mn(2+) binding site. Residue 145-147 (SAD) coordinates substrate. The active-site Nucleophile is the lysine 164.

It belongs to the pseudouridine-5'-phosphate glycosidase family. In terms of assembly, homotrimer. It depends on Mn(2+) as a cofactor.

The catalysed reaction is D-ribose 5-phosphate + uracil = psi-UMP + H2O. Its function is as follows. Catalyzes the reversible cleavage of pseudouridine 5'-phosphate (PsiMP) to ribose 5-phosphate and uracil. Functions biologically in the cleavage direction, as part of a pseudouridine degradation pathway. The protein is Pseudouridine-5'-phosphate glycosidase of Mesorhizobium japonicum (strain LMG 29417 / CECT 9101 / MAFF 303099) (Mesorhizobium loti (strain MAFF 303099)).